Reading from the N-terminus, the 494-residue chain is Cytochrome P450 2G1 (494 aa).

Cys439 is a heme binding site.

Belongs to the cytochrome P450 family. The cofactor is heme. As to expression, olfactory epithelium.

Its subcellular location is the endoplasmic reticulum membrane. The protein localises to the microsome membrane. It carries out the reaction an organic molecule + reduced [NADPH--hemoprotein reductase] + O2 = an alcohol + oxidized [NADPH--hemoprotein reductase] + H2O + H(+). In terms of biological role, cytochromes P450 are a group of heme-thiolate monooxygenases. This isozyme seems to be implicated in olfaction. The polypeptide is Cytochrome P450 2G1 (CYP2G1) (Oryctolagus cuniculus (Rabbit)).